The chain runs to 2609 residues: Mycosubtilin synthase subunit C (2609 aa).

The domain 1 (D-serine-activating) stretch occupies residues 258–1628; sequence PREKTIHQLF…RVCAQPEMTV (1371 aa). Residues 288–695 form an adenylation 1 region; it reads TYQELNEKAN…HIPSIQESIV (408 aa). In terms of domain architecture, Carrier 1 spans 771-845; the sequence is APRTELEKIL…ELVPYVEPVT (75 aa). O-(pantetheine 4'-phosphoryl)serine is present on Ser806. The segment at 853–1312 is epimerization 1; that stretch reads IKGPALLTPI…EISIDELDQF (460 aa). Residues 1322 to 1623 form a condensation 1 region; the sequence is IENIYPLTPM…NTIPVRVCAQ (302 aa). The segment at 1778-2359 is domain 2 (isoleucine-activating); it reads PKEKTIYQLF…AHAIQAAALP (582 aa). Positions 1808-2205 are adenylation 2; sequence TYRQLNEQAN…LVESVKEAVV (398 aa). Residues 2282-2357 form the Carrier 2 domain; the sequence is APRTLIEKQL…TMAHAIQAAA (76 aa). Ser2317 carries the O-(pantetheine 4'-phosphoryl)serine modification. The thioesterase stretch occupies residues 2375-2581; sequence IPVFCFPPLI…ENMSTIRSIM (207 aa).

It belongs to the ATP-dependent AMP-binding enzyme family. Requires pantetheine 4'-phosphate as cofactor.

This protein is a multifunctional enzyme, able to activate and polymerize the amino acids Ser and Asn as part of the synthesis of mycosubtilin. The Ser residue is further epimerized to the D-isomer form. The activation sites for these amino acids consist of individual domains. The chain is Mycosubtilin synthase subunit C (mycC) from Bacillus subtilis.